A 264-amino-acid polypeptide reads, in one-letter code: Small ribosomal subunit protein uS3 (264 aa).

A KH type-2 domain is found at 39–107 (VRDFLKKKLK…PVHVNIEEIR (69 aa)). Residues 211 to 264 (NDAPVVEEPQDDRRRRPGRPEGRRREGEGRPGGNRRGGAGAGRRAAPGDAKSGE) form a disordered region. A compositionally biased stretch (basic and acidic residues) spans 221 to 239 (DDRRRRPGRPEGRRREGEG). The span at 240–251 (RPGGNRRGGAGA) shows a compositional bias: gly residues.

It belongs to the universal ribosomal protein uS3 family. As to quaternary structure, part of the 30S ribosomal subunit. Forms a tight complex with proteins S10 and S14.

Its function is as follows. Binds the lower part of the 30S subunit head. Binds mRNA in the 70S ribosome, positioning it for translation. In Cupriavidus pinatubonensis (strain JMP 134 / LMG 1197) (Cupriavidus necator (strain JMP 134)), this protein is Small ribosomal subunit protein uS3.